We begin with the raw amino-acid sequence, 430 residues long: tRNA(Ile)-lysidine synthase (430 aa).

Ser-21–Ser-26 is an ATP binding site.

This sequence belongs to the tRNA(Ile)-lysidine synthase family.

It is found in the cytoplasm. It catalyses the reaction cytidine(34) in tRNA(Ile2) + L-lysine + ATP = lysidine(34) in tRNA(Ile2) + AMP + diphosphate + H(+). Its function is as follows. Ligates lysine onto the cytidine present at position 34 of the AUA codon-specific tRNA(Ile) that contains the anticodon CAU, in an ATP-dependent manner. Cytidine is converted to lysidine, thus changing the amino acid specificity of the tRNA from methionine to isoleucine. The sequence is that of tRNA(Ile)-lysidine synthase from Salmonella paratyphi B (strain ATCC BAA-1250 / SPB7).